Reading from the N-terminus, the 346-residue chain is Ribonucleoside-diphosphate reductase subunit beta (346 aa).

Residues E89, E120, and H123 each coordinate Fe cation. Y129 is a catalytic residue. Fe cation contacts are provided by E193, E227, and H230.

Belongs to the ribonucleoside diphosphate reductase small chain family. In terms of assembly, tetramer of two alpha and two beta subunits. Fe cation is required as a cofactor.

The enzyme catalyses a 2'-deoxyribonucleoside 5'-diphosphate + [thioredoxin]-disulfide + H2O = a ribonucleoside 5'-diphosphate + [thioredoxin]-dithiol. Its function is as follows. Provides the precursors necessary for DNA synthesis. Catalyzes the biosynthesis of deoxyribonucleotides from the corresponding ribonucleotides. This chain is Ribonucleoside-diphosphate reductase subunit beta (nrdB), found in Chlamydia trachomatis serovar D (strain ATCC VR-885 / DSM 19411 / UW-3/Cx).